A 670-amino-acid chain; its full sequence is Tripeptidyl-peptidase SED1 (670 aa).

The N-terminal stretch at 1–20 (MSTMIFMYFIYIVLYASGIA) is a signal peptide. A propeptide spans 21–231 (ANLSYHVHEK…VGLLKNKILS (211 aa)) (removed in mature form). A Peptidase S53 domain is found at 241–669 (LITPDCLRAL…DRMLDLFLQL (429 aa)). Residues Glu318 and Asp322 each act as charge relay system in the active site. 5 N-linked (GlcNAc...) asparagine glycosylation sites follow: Asn334, Asn387, Asn488, Asn508, and Asn551. Ser586 acts as the Charge relay system in catalysis. The Ca(2+) site is built by Asp627, Val628, Gly647, and Asp649.

Ca(2+) is required as a cofactor.

It is found in the secreted. Its subcellular location is the extracellular space. The catalysed reaction is Release of an N-terminal tripeptide from a polypeptide.. In terms of biological role, secreted tripeptidyl-peptidase which degrades proteins at acidic pHs and is involved in virulence. This is Tripeptidyl-peptidase SED1 (SED1) from Arthroderma otae (strain ATCC MYA-4605 / CBS 113480) (Microsporum canis).